The following is a 224-amino-acid chain: N-(5'-phosphoribosyl)anthranilate isomerase (224 aa).

The protein belongs to the TrpF family.

It catalyses the reaction N-(5-phospho-beta-D-ribosyl)anthranilate = 1-(2-carboxyphenylamino)-1-deoxy-D-ribulose 5-phosphate. The protein operates within amino-acid biosynthesis; L-tryptophan biosynthesis; L-tryptophan from chorismate: step 3/5. The chain is N-(5'-phosphoribosyl)anthranilate isomerase from Allorhizobium ampelinum (strain ATCC BAA-846 / DSM 112012 / S4) (Agrobacterium vitis (strain S4)).